The chain runs to 63 residues: Metallothionein-2 (63 aa).

This sequence belongs to the metallothionein superfamily. Type 6 family.

In terms of biological role, this protein binds cations of several transition elements. This chain is Metallothionein-2 (mtl-2), found in Caenorhabditis elegans.